The sequence spans 95 residues: Aspartyl/glutamyl-tRNA(Asn/Gln) amidotransferase subunit C (95 aa).

This sequence belongs to the GatC family. Heterotrimer of A, B and C subunits.

The enzyme catalyses L-glutamyl-tRNA(Gln) + L-glutamine + ATP + H2O = L-glutaminyl-tRNA(Gln) + L-glutamate + ADP + phosphate + H(+). It catalyses the reaction L-aspartyl-tRNA(Asn) + L-glutamine + ATP + H2O = L-asparaginyl-tRNA(Asn) + L-glutamate + ADP + phosphate + 2 H(+). Its function is as follows. Allows the formation of correctly charged Asn-tRNA(Asn) or Gln-tRNA(Gln) through the transamidation of misacylated Asp-tRNA(Asn) or Glu-tRNA(Gln) in organisms which lack either or both of asparaginyl-tRNA or glutaminyl-tRNA synthetases. The reaction takes place in the presence of glutamine and ATP through an activated phospho-Asp-tRNA(Asn) or phospho-Glu-tRNA(Gln). In Bartonella quintana (strain Toulouse) (Rochalimaea quintana), this protein is Aspartyl/glutamyl-tRNA(Asn/Gln) amidotransferase subunit C.